Consider the following 389-residue polypeptide: Alpha-2B adrenergic receptor (389 aa).

The chain crosses the membrane as a helical span at residues 1 to 25 (AIAAVITFLILFTIFGNALVILAVL). Residues 26 to 36 (TSRSLRAPQNL) are Cytoplasmic-facing. The chain crosses the membrane as a helical span at residues 37 to 62 (FLVSLAAADILVATLIIPFSLANELL). Residues 63 to 72 (GYWYFRRTWC) are Extracellular-facing. Cys72 and Cys151 are joined by a disulfide. The helical transmembrane segment at 73 to 95 (EVYLALDVLFCTSSIVHLCAISL) threads the bilayer. Over 96–117 (DRYWAVTRALEYNTKRTPRRIK) the chain is Cytoplasmic. Residues 118-140 (CIILTVWLIAAVISLPPLIYKGD) traverse the membrane as a helical segment. The Extracellular segment spans residues 141–156 (QGPQPRGRPQCKLNQE). The chain crosses the membrane as a helical span at residues 157–180 (AWYILASSIGSFFAPCLIMILVYL). Residues 181–363 (RIYLIAKRSH…LTREKRFTFV (183 aa)) lie on the Cytoplasmic side of the membrane. 2 disordered regions span residues 194-216 (PRAKGGPGGGGSKQPHPVPAGAS) and 233-320 (EANG…PLQQ). Gly residues predominate over residues 196–205 (AKGGPGGGGS). Residues 255 to 267 (PALPSSWPALPSS) are compositionally biased toward low complexity. Positions 280–302 (LEEEAEEEEEEEEEEEEGEEECE) are enriched in acidic residues. Over residues 303–320 (PQALPASPASACSPPLQQ) the composition is skewed to low complexity. A helical membrane pass occupies residues 364 to 387 (LAVVIGVFVLCWFPFFFSYSLGAI). The Extracellular segment spans residues 388–389 (CP).

Belongs to the G-protein coupled receptor 1 family. Adrenergic receptor subfamily. ADRA2B sub-subfamily. Interacts with RAB26. Interacts with PPP1R9B. Interacts with GGA1, GGA2 and GGA3.

It localises to the cell membrane. Its function is as follows. Alpha-2 adrenergic receptors mediate the catecholamine-induced inhibition of adenylate cyclase through the action of G proteins. This is Alpha-2B adrenergic receptor (ADRA2B) from Equus caballus (Horse).